The following is a 1481-amino-acid chain: Cystic fibrosis transmembrane conductance regulator (1481 aa).

At 1-77 the chain is on the cytoplasmic side; sequence MQRSPLEKAS…KLINALRRCF (77 aa). A helical transmembrane segment spans residues 78-98; sequence FWRFMFYGILLYLGEVTKAVQ. Positions 81–365 constitute an ABC transmembrane type-1 1 domain; sequence FMFYGILLYL…WAVQTWYDSL (285 aa). Over 99 to 122 the chain is Extracellular; the sequence is PLLLGRIIASYDPDNKEERSIAIY. Residues 123 to 146 form a helical membrane-spanning segment; it reads LGIGLCLLFIVRTLLLHPAIFGLH. At 147–195 the chain is on the cytoplasmic side; sequence HIGMQMRIAMFSLIYKKTLKLSSRVLDKISIGQLVSLLSNNLNKFDEGL. The chain crosses the membrane as a helical span at residues 196 to 216; sequence ALAHFVWIVPLQVALLMGLIW. At 217–222 the chain is on the extracellular side; it reads ELLQAS. A helical transmembrane segment spans residues 223–243; it reads AFCGLGFLIVLALFQAGLGRM. Over 244 to 298 the chain is Cytoplasmic; the sequence is MMKYRDQRAGKINERLVITSEMIENIQSVKAYCWEEAMEKMIENLRQTELKLTRK. The helical transmembrane segment at 299–319 threads the bilayer; sequence AAYVRYFNSSAFFFSGFFVVF. The Extracellular segment spans residues 320-339; the sequence is LSVLPYALIKGIVLRKIFTT. A helical membrane pass occupies residues 340–358; sequence ISFCIVLRMAVTRQFPWAV. Over 359–858 the chain is Cytoplasmic; the sequence is QTWYDSLGAI…YLRYITVHKS (500 aa). ATP-binding positions include tryptophan 401, serine 434, 458–465, and glutamine 493; that span reads GSTGAGKT. Residues 423–646 form the ABC transporter 1 domain; the sequence is NDDDSLFFSN…RPDFSSKLMG (224 aa). Residue cysteine 524 is the site of S-palmitoyl cysteine attachment. 2 positions are modified to phosphoserine: serine 549 and serine 660. The disordered R region stretch occupies residues 654–831; that stretch reads SAERRNSILT…EEINEEDLKE (178 aa). Residue serine 670 is modified to Phosphoserine; by PKA. Phosphoserine is present on serine 686. Residue lysine 688 forms a Glycyl lysine isopeptide (Lys-Gly) (interchain with G-Cter in ubiquitin) linkage. 2 positions are modified to phosphoserine: serine 700 and serine 712. Threonine 717 bears the Phosphothreonine mark. Phosphoserine is present on residues serine 737, serine 753, serine 768, serine 790, serine 795, and serine 813. A helical transmembrane segment spans residues 859 to 879; that stretch reads LIFVLIWCLVIFLAEVAASLV. An ABC transmembrane type-1 2 domain is found at 859 to 1155; that stretch reads LIFVLIWCLV…AVNSSIDVDS (297 aa). Residues 880 to 918 are Extracellular-facing; sequence VLWFLGNTPPQDKGNSTYSRNNSYAVIITRTSSYYVFYI. Asparagine 894 and asparagine 900 each carry an N-linked (GlcNAc...) asparagine glycan. Residues 919 to 939 traverse the membrane as a discontinuously helical segment; the sequence is YVGVADTLLAMGFFRGLPLVH. Over 940 to 990 the chain is Cytoplasmic; it reads TLITVSKILHHKMLHSVLQAPMSTLNTLKAGGILNRFSKDIAILDDLLPLT. A helical transmembrane segment spans residues 991–1011; the sequence is IFDFIQLLLIVIGAIAVVAVL. Residues 1012-1013 are Extracellular-facing; that stretch reads QP. The chain crosses the membrane as a helical span at residues 1014–1034; it reads YIFVATVPVIVAFIMLRAYFL. Topologically, residues 1035–1095 are cytoplasmic; it reads QTSQQLKQLE…TANWFLYLST (61 aa). The chain crosses the membrane as a helical span at residues 1096–1116; it reads LRWFQMRIEMIFVIFFIAVTF. Topologically, residues 1117–1130 are extracellular; that stretch reads ISILTTGEGEGTVG. Residues 1131-1151 form a helical membrane-spanning segment; the sequence is IILTLAMNIMSTLQWAVNSSI. Residues 1152-1481 lie on the Cytoplasmic side of the membrane; the sequence is DVDSLMRSVS…TEEEVQDTRL (330 aa). The region spanning 1211–1444 is the ABC transporter 2 domain; it reads MTVKDLTAKY…RSLFRQAISP (234 aa). ATP is bound by residues tyrosine 1220 and 1245–1252; that span reads GRTGSGKS. Residues 1387–1481 are interaction with GORASP2; it reads RTLKQAFADC…TEEEVQDTRL (95 aa). A lipid anchor (S-palmitoyl cysteine) is attached at cysteine 1396. Serine 1445 and serine 1457 each carry phosphoserine. Residues 1462–1481 are disordered; the sequence is QPQIAALKEETEEEVQDTRL. The span at 1471-1481 shows a compositional bias: acidic residues; that stretch reads ETEEEVQDTRL. The short motif at 1479-1481 is the PDZ-binding element; the sequence is TRL.

This sequence belongs to the ABC transporter superfamily. ABCC family. CFTR transporter (TC 3.A.1.202) subfamily. In terms of assembly, monomer; does not require oligomerization for channel activity. May form oligomers in the membrane. Interacts with SLC26A3, SLC26A6 and NHERF1. Interacts with SHANK2. Interacts with MYO6. Interacts (via C-terminus) with GOPC (via PDZ domain); this promotes CFTR internalization and thereby decreases channel activity. Interacts with SLC4A7 through NHERF1. Found in a complex with MYO5B and RAB11A. Interacts with ANO1. Interacts with SLC26A8. Interacts with AHCYL1; the interaction increases CFTR activity. Interacts with CSE1L. The core-glycosylated form interacts with GORASP2 (via PDZ GRASP-type 1 domain) in respone to ER stress. Interacts with MARCHF2; the interaction leads to CFTR ubiqtuitination and degradation. Interacts with ADGRG2. Post-translationally, N-glycosylated. In terms of processing, phosphorylated; cAMP treatment promotes phosphorylation and activates the channel. Dephosphorylation decreases the ATPase activity (in vitro). Phosphorylation at PKA sites activates the channel. Phosphorylation at PKC sites enhances the response to phosphorylation by PKA. Phosphorylated by AMPK; this inhibits channel activity. Ubiquitinated, leading to its degradation in the lysosome. Deubiquitination by USP10 in early endosomes enhances its endocytic recycling to the cell membrane. Ubiquitinated by RNF185 during ER stress. Ubiquitinated by MARCHF2.

The protein localises to the apical cell membrane. It is found in the early endosome membrane. The protein resides in the cell membrane. It localises to the recycling endosome membrane. Its subcellular location is the endoplasmic reticulum membrane. The protein localises to the nucleus. The enzyme catalyses ATP + H2O + closed Cl(-) channel = ADP + phosphate + open Cl(-) channel.. The catalysed reaction is chloride(in) = chloride(out). It catalyses the reaction hydrogencarbonate(in) = hydrogencarbonate(out). It carries out the reaction ATP + H2O = ADP + phosphate + H(+). In terms of biological role, epithelial ion channel that plays an important role in the regulation of epithelial ion and water transport and fluid homeostasis. Mediates the transport of chloride ions across the cell membrane. Possesses an intrinsic ATPase activity and utilizes ATP to gate its channel; the passive flow of anions through the channel is gated by cycles of ATP binding and hydrolysis by the ATP-binding domains. The ion channel is also permeable to HCO(3)(-); selectivity depends on the extracellular chloride concentration. Exerts its function also by modulating the activity of other ion channels and transporters. Contributes to the regulation of the pH and the ion content of the epithelial fluid layer. Modulates the activity of the epithelial sodium channel (ENaC) complex, in part by regulating the cell surface expression of the ENaC complex. May regulate bicarbonate secretion and salvage in epithelial cells by regulating the transporter SLC4A7. Can inhibit the chloride channel activity of ANO1. Plays a role in the chloride and bicarbonate homeostasis during sperm epididymal maturation and capacitation. The chain is Cystic fibrosis transmembrane conductance regulator from Papio anubis (Olive baboon).